We begin with the raw amino-acid sequence, 387 residues long: Protein WHAT'S THIS FACTOR 9, mitochondrial (387 aa).

Residues 1 to 24 (MLSIRRHAKTVASSCTNLTQKRTY) constitute a mitochondrion transit peptide. Residues 32–358 (KRDPYFDNIE…KKYIQLMKNS (327 aa)) form the PORR domain.

It localises to the mitochondrion. Its function is as follows. RNA-binding protein involved in group II intron splicing. Binds specific group II introns and promotes their splicing (e.g. rpl2 and ccmFC). This Arabidopsis thaliana (Mouse-ear cress) protein is Protein WHAT'S THIS FACTOR 9, mitochondrial.